Reading from the N-terminus, the 317-residue chain is Melanocyte-stimulating hormone receptor (317 aa).

Residues 1-37 (MAVQGSQRRLLGSLNSTPTAIPQLGLAANQTGAWCLE) are Extracellular-facing. Asn29 carries an N-linked (GlcNAc...) asparagine glycan. Residues 38–63 (VSIPDGLFLSLGLVSLVENVLVVATI) form a helical membrane-spanning segment. At 64-72 (AKNRNLHSP) the chain is on the cytoplasmic side. Residues 73–93 (MYCFICCLALSDLLVSGGNVL) traverse the membrane as a helical segment. At 94 to 118 (ETAVILLLEAGALAARAAVVQQLDN) the chain is on the extracellular side. A helical transmembrane segment spans residues 119-140 (VIDVITCSSMLSSLCFLGAIAV). Over 141–163 (DRYISIFYALRYHSIVTLPRARR) the chain is Cytoplasmic. The chain crosses the membrane as a helical span at residues 164-183 (AIAAIWVASVLFSTLFIAYY). Residues 184–191 (DHAAVLLC) are Extracellular-facing. Residues 192-211 (LVVFFLAMLVLMAVLYVHML) traverse the membrane as a helical segment. Topologically, residues 212–240 (ARACQHAQGIARLHKRQRPVHQGFGLKGA) are cytoplasmic. A helical membrane pass occupies residues 241–266 (VTLTILLGIFFLCWGPFFLHLTLIVL). The Extracellular portion of the chain corresponds to 267-279 (CPQHPTCSCIFKN). The chain crosses the membrane as a helical span at residues 280–300 (FNLFLALIICNAIIDPLIYAF). Topologically, residues 301–317 (RSQELRRTLKEVLTCSW) are cytoplasmic. The S-palmitoyl cysteine moiety is linked to residue Cys315.

This sequence belongs to the G-protein coupled receptor 1 family. In terms of assembly, interacts with MGRN1, but does not undergo MGRN1-mediated ubiquitination; this interaction competes with GNAS-binding and thus inhibits agonist-induced cAMP production. Interacts with OPN3; the interaction results in a decrease in MC1R-mediated cAMP signaling and ultimately a decrease in melanin production in melanocytes.

Its subcellular location is the cell membrane. Receptor for MSH (alpha, beta and gamma) and ACTH. The activity of this receptor is mediated by G proteins which activate adenylate cyclase. Mediates melanogenesis, the production of eumelanin (black/brown) and phaeomelanin (red/yellow), via regulation of cAMP signaling in melanocytes. This chain is Melanocyte-stimulating hormone receptor (MC1R), found in Pongo pygmaeus (Bornean orangutan).